We begin with the raw amino-acid sequence, 422 residues long: MIPRIKKTICVLLVCFTMLSVMLGPGATEVLAASDVTVNVSAEKQVIRGFGGMNHPAWAGDLTAAQRETAFGNGQNQLGFSILRIHVDENRNNWYKEVETAKSAVKHGAIVFASPWNPPSDMVETFNRNGDTSAKRLKYNKYAAYAQHLNDFVTFMKNNGVNLYAISVQNEPDYAHEWTWWTPQEILRFMRENAGSINARVIAPESFQYLKNLSDPILNDPQALANMDILGTHLYGTQVSQFPYPLFKQKGAGKDLWMTEVYYPNSDTNSADRWPEALDVSQHIHNAMVEGDFQAYVWWYIRRSYGPMKEDGTISKRGYNMAHFSKFVRPGYVRIDATKNPNANVYVSAYKGDNKVVIVAINKSNTGVNQNFVLQNGSASNVSRWITSSSSNLQPGTNLTVSGNHFWAHLPAQSVTTFVVNR.

The N-terminal stretch at 1 to 32 is a signal peptide; sequence MIPRIKKTICVLLVCFTMLSVMLGPGATEVLA. Catalysis depends on Glu-171, which acts as the Proton donor. Glu-260 functions as the Nucleophile in the catalytic mechanism.

The protein belongs to the glycosyl hydrolase 30 family.

It is found in the secreted. The enzyme catalyses Endohydrolysis of (1-&gt;4)-beta-D-xylosyl links in some glucuronoarabinoxylans.. Its pathway is glycan degradation; xylan degradation. Catalyzes the depolymerization of methylglucuronoxylan (MeGAXn) from different sources. It cleaves the beta-1,4-xylosidic bond penultimate to that linking carbon one of the xylose residue substituted with alpha-1,2-linked 4-O-methyl-D-glucuronate (MeGA). The chain is Glucuronoxylanase XynC (xynC) from Bacillus subtilis (strain 168).